The chain runs to 223 residues: Probable transaldolase (223 aa).

Residue Lys92 is the Schiff-base intermediate with substrate of the active site.

Belongs to the transaldolase family. Type 3B subfamily.

Its subcellular location is the cytoplasm. It catalyses the reaction D-sedoheptulose 7-phosphate + D-glyceraldehyde 3-phosphate = D-erythrose 4-phosphate + beta-D-fructose 6-phosphate. Its pathway is carbohydrate degradation; pentose phosphate pathway; D-glyceraldehyde 3-phosphate and beta-D-fructose 6-phosphate from D-ribose 5-phosphate and D-xylulose 5-phosphate (non-oxidative stage): step 2/3. In terms of biological role, transaldolase is important for the balance of metabolites in the pentose-phosphate pathway. The protein is Probable transaldolase of Thermus thermophilus (strain ATCC 27634 / DSM 579 / HB8).